The chain runs to 1133 residues: Nuclear pore complex-interacting protein family member B5 (1133 aa).

The helical transmembrane segment at 60-84 (WLHVIIAFPTSYKVVITLWIVYLWV) threads the bilayer. Disordered regions lie at residues 241 to 262 (NRMG…NSLS), 290 to 575 (LTPL…IKTP), and 868 to 1133 (ERLR…RRLS). Positions 252–262 (QQHSITDNSLS) are enriched in polar residues. A compositionally biased stretch (pro residues) spans 349 to 359 (PLPPSALPSAP). Basic and acidic residues-rich tracts occupy residues 406 to 416 (DNIKTPAERLR), 448 to 458 (DNIKTPAERLR), 490 to 500 (DNIKTPAERLR), 528 to 538 (DNIKTPAERLR), 903 to 913 (DNIKTPAERLR), 945 to 955 (DNIKTPAERLR), and 987 to 997 (DNIKTPAERLR).

Belongs to the NPIP family.

Its subcellular location is the membrane. This chain is Nuclear pore complex-interacting protein family member B5 (NPIPB5), found in Homo sapiens (Human).